The sequence spans 157 residues: Sorting nexin-3 (157 aa).

The interval 1-21 (MSKPFQPISDVINTSPKNKSQ) is disordered. Positions 11 to 21 (VINTSPKNKSQ) are enriched in polar residues. The PX domain occupies 32–152 (NFLEIEVKNP…EFIQNEKWDP (121 aa)). Positions 75, 77, 101, and 117 each coordinate a 1,2-diacyl-sn-glycero-3-phospho-(1D-myo-inositol-3-phosphate).

Belongs to the sorting nexin family.

Its subcellular location is the cytoplasm. The protein localises to the golgi apparatus membrane. The protein resides in the prevacuolar compartment membrane. Required for retention of late Golgi membrane proteins. Component of the retrieval machinery that functions by direct interaction with the cytosolic tails of certain TGN membrane proteins during the sorting/budding process at the prevacuolar compartment. Binds phosphatidylinositol 3-phosphate (PtdIns(P3)). This chain is Sorting nexin-3 (SNX3), found in Candida albicans (strain SC5314 / ATCC MYA-2876) (Yeast).